An 876-amino-acid polypeptide reads, in one-letter code: Valine--tRNA ligase (876 aa).

The 'HIGH' region motif lies at 44–54 (PNVTGKLHLGH). The 'KMSKS' region signature appears at 520-524 (KMSKS). Lys523 is a binding site for ATP. The stretch at 805–876 (LEGLIDMDKE…VKARIEQLKA (72 aa)) forms a coiled coil.

Belongs to the class-I aminoacyl-tRNA synthetase family. ValS type 1 subfamily. As to quaternary structure, monomer.

The protein localises to the cytoplasm. The enzyme catalyses tRNA(Val) + L-valine + ATP = L-valyl-tRNA(Val) + AMP + diphosphate. Functionally, catalyzes the attachment of valine to tRNA(Val). As ValRS can inadvertently accommodate and process structurally similar amino acids such as threonine, to avoid such errors, it has a 'posttransfer' editing activity that hydrolyzes mischarged Thr-tRNA(Val) in a tRNA-dependent manner. In Staphylococcus aureus (strain JH1), this protein is Valine--tRNA ligase.